The primary structure comprises 89 residues: UPF0237 protein CA_C0478 (89 aa).

The ACT domain occupies Ile4–Gln78.

Belongs to the UPF0237 family.

The chain is UPF0237 protein CA_C0478 from Clostridium acetobutylicum (strain ATCC 824 / DSM 792 / JCM 1419 / IAM 19013 / LMG 5710 / NBRC 13948 / NRRL B-527 / VKM B-1787 / 2291 / W).